Reading from the N-terminus, the 198-residue chain is HTH-type transcriptional regulator BetI (198 aa).

The HTH tetR-type domain occupies 8–68 (PIRRQQLIDA…ATMRYLISHL (61 aa)). The segment at residues 31-50 (TIAQIARRAGVSNGIISHYF) is a DNA-binding region (H-T-H motif).

Its pathway is amine and polyamine biosynthesis; betaine biosynthesis via choline pathway [regulation]. Repressor involved in the biosynthesis of the osmoprotectant glycine betaine. It represses transcription of the choline transporter BetT and the genes of BetAB involved in the synthesis of glycine betaine. The sequence is that of HTH-type transcriptional regulator BetI from Serratia proteamaculans (strain 568).